Consider the following 279-residue polypeptide: Ribosomal RNA small subunit methyltransferase A (279 aa).

Residues histidine 15, leucine 17, glycine 42, glutamate 64, aspartate 89, and asparagine 109 each coordinate S-adenosyl-L-methionine.

Belongs to the class I-like SAM-binding methyltransferase superfamily. rRNA adenine N(6)-methyltransferase family. RsmA subfamily.

The protein resides in the cytoplasm. The catalysed reaction is adenosine(1518)/adenosine(1519) in 16S rRNA + 4 S-adenosyl-L-methionine = N(6)-dimethyladenosine(1518)/N(6)-dimethyladenosine(1519) in 16S rRNA + 4 S-adenosyl-L-homocysteine + 4 H(+). Specifically dimethylates two adjacent adenosines (A1518 and A1519) in the loop of a conserved hairpin near the 3'-end of 16S rRNA in the 30S particle. May play a critical role in biogenesis of 30S subunits. The protein is Ribosomal RNA small subunit methyltransferase A of Prochlorococcus marinus (strain SARG / CCMP1375 / SS120).